A 520-amino-acid polypeptide reads, in one-letter code: Biotinidase (520 aa).

Residues 1-21 (MSGARTAPALFFLGCSALALG) form the signal peptide. A CN hydrolase domain is found at 49-333 (NPLELVSRQE…TGNTTSEMDP (285 aa)). The active-site Proton acceptor is the glutamate 89. Residues asparagine 96, asparagine 127, and asparagine 180 are each glycosylated (N-linked (GlcNAc...) asparagine). Lysine 189 acts as the Proton donor in catalysis. Cysteine 222 (nucleophile) is an active-site residue. Asparagine 326, asparagine 379, and asparagine 466 each carry an N-linked (GlcNAc...) asparagine glycan.

It belongs to the carbon-nitrogen hydrolase superfamily. BTD/VNN family.

The protein resides in the secreted. It localises to the extracellular space. It catalyses the reaction biocytin + H2O = biotin + L-lysine. The enzyme catalyses biotin amide + H2O = biotin + NH4(+). Functionally, catalytic release of biotin from biocytin, the product of biotin-dependent carboxylases degradation. This chain is Biotinidase (Btd), found in Mus musculus (Mouse).